Reading from the N-terminus, the 177-residue chain is Bifunctional protein PyrR (177 aa).

Residues 99–111 (VVLVDDVIYKGRT) carry the PRPP-binding motif.

It belongs to the purine/pyrimidine phosphoribosyltransferase family. PyrR subfamily.

It carries out the reaction UMP + diphosphate = 5-phospho-alpha-D-ribose 1-diphosphate + uracil. Its function is as follows. Regulates the transcription of the pyrimidine nucleotide (pyr) operon in response to exogenous pyrimidines. In terms of biological role, also displays a weak uracil phosphoribosyltransferase activity which is not physiologically significant. The protein is Bifunctional protein PyrR of Gloeothece citriformis (strain PCC 7424) (Cyanothece sp. (strain PCC 7424)).